The following is a 223-amino-acid chain: Deoxyribose-phosphate aldolase (223 aa).

The Proton donor/acceptor role is filled by aspartate 89. Lysine 154 functions as the Schiff-base intermediate with acetaldehyde in the catalytic mechanism. Residue lysine 183 is the Proton donor/acceptor of the active site.

The protein belongs to the DeoC/FbaB aldolase family. DeoC type 1 subfamily.

It localises to the cytoplasm. The catalysed reaction is 2-deoxy-D-ribose 5-phosphate = D-glyceraldehyde 3-phosphate + acetaldehyde. It participates in carbohydrate degradation; 2-deoxy-D-ribose 1-phosphate degradation; D-glyceraldehyde 3-phosphate and acetaldehyde from 2-deoxy-alpha-D-ribose 1-phosphate: step 2/2. Its function is as follows. Catalyzes a reversible aldol reaction between acetaldehyde and D-glyceraldehyde 3-phosphate to generate 2-deoxy-D-ribose 5-phosphate. This chain is Deoxyribose-phosphate aldolase, found in Thermoanaerobacter sp. (strain X514).